The chain runs to 534 residues: Serine/threonine-protein kinase ppk15 (534 aa).

A disordered region spans residues 1–40; sequence MDSDSPILPLSNNPPAARTHDHSQRNNHARHVSSSGTTLF. Residues Ser-33, Ser-56, and Ser-60 each carry the phosphoserine modification. The segment at 85 to 104 is disordered; sequence FSSEQNPRRPLTKPSEGVHN. One can recognise a Protein kinase domain in the interval 130–458; it reads YLILDTLGHG…PDQAKNHPFI (329 aa). ATP contacts are provided by residues 136-144 and Lys-159; that span reads LGHGTFGQV. The active-site Proton acceptor is Asp-257. Tyr-291 carries the post-translational modification Phosphotyrosine.

Belongs to the protein kinase superfamily. Ser/Thr protein kinase family.

The protein resides in the cytoplasm. Its subcellular location is the cytoskeleton. It is found in the microtubule organizing center. The protein localises to the spindle pole body. The enzyme catalyses L-seryl-[protein] + ATP = O-phospho-L-seryl-[protein] + ADP + H(+). It carries out the reaction L-threonyl-[protein] + ATP = O-phospho-L-threonyl-[protein] + ADP + H(+). The protein is Serine/threonine-protein kinase ppk15 (ppk15) of Schizosaccharomyces pombe (strain 972 / ATCC 24843) (Fission yeast).